We begin with the raw amino-acid sequence, 678 residues long: uncharacterized protein (678 aa).

The interval 1–26 (MGVHFDDNANTTWEATDPGVSSDCDG) is disordered. 9 helical membrane passes run 119–139 (LLLL…LIYP), 245–265 (SFPC…GGCT), 317–337 (AAVV…YDSI), 340–360 (YWIN…PPLL), 371–391 (ELFS…YVVW), 405–425 (IAKV…NVTF), 443–463 (GALT…VIQA), 475–495 (YFKI…LPGL), and 519–539 (AYLF…RWDF).

It is found in the vacuole membrane. This is an uncharacterized protein from Saccharomyces cerevisiae (strain ATCC 204508 / S288c) (Baker's yeast).